Here is a 298-residue protein sequence, read N- to C-terminus: Homoserine kinase (298 aa).

92–102 (PLARGLGSSAT) lines the ATP pocket.

This sequence belongs to the GHMP kinase family. Homoserine kinase subfamily.

The protein localises to the cytoplasm. The enzyme catalyses L-homoserine + ATP = O-phospho-L-homoserine + ADP + H(+). It participates in amino-acid biosynthesis; L-threonine biosynthesis; L-threonine from L-aspartate: step 4/5. Its function is as follows. Catalyzes the ATP-dependent phosphorylation of L-homoserine to L-homoserine phosphate. The protein is Homoserine kinase (thrB) of Nostoc sp. (strain PCC 7120 / SAG 25.82 / UTEX 2576).